We begin with the raw amino-acid sequence, 332 residues long: tRNA U34 carboxymethyltransferase (332 aa).

Residues Lys-91, Trp-105, Lys-110, Gly-130, 152–154, 181–182, Met-196, Tyr-200, and Arg-315 contribute to the carboxy-S-adenosyl-L-methionine site; these read DPS and IE.

It belongs to the class I-like SAM-binding methyltransferase superfamily. CmoB family. Homotetramer.

It carries out the reaction carboxy-S-adenosyl-L-methionine + 5-hydroxyuridine(34) in tRNA = 5-carboxymethoxyuridine(34) in tRNA + S-adenosyl-L-homocysteine + H(+). In terms of biological role, catalyzes carboxymethyl transfer from carboxy-S-adenosyl-L-methionine (Cx-SAM) to 5-hydroxyuridine (ho5U) to form 5-carboxymethoxyuridine (cmo5U) at position 34 in tRNAs. In Shewanella putrefaciens (strain CN-32 / ATCC BAA-453), this protein is tRNA U34 carboxymethyltransferase.